The sequence spans 482 residues: UDP-N-acetylmuramoyl-L-alanyl-D-glutamate--2,6-diaminopimelate ligase 1 (482 aa).

Ser-30 lines the UDP-N-acetyl-alpha-D-muramoyl-L-alanyl-D-glutamate pocket. Residue 110–116 (GTNGKTT) coordinates ATP. UDP-N-acetyl-alpha-D-muramoyl-L-alanyl-D-glutamate is bound by residues 152 to 153 (TT), Ser-179, and Arg-187. At Lys-219 the chain carries N6-carboxylysine. Meso-2,6-diaminopimelate contacts are provided by residues Arg-378, 402–405 (DNPR), Gly-452, and Glu-456. Residues 402–405 (DNPR) carry the Meso-diaminopimelate recognition motif motif.

This sequence belongs to the MurCDEF family. MurE subfamily. It depends on Mg(2+) as a cofactor. Carboxylation is probably crucial for Mg(2+) binding and, consequently, for the gamma-phosphate positioning of ATP.

It is found in the cytoplasm. It carries out the reaction UDP-N-acetyl-alpha-D-muramoyl-L-alanyl-D-glutamate + meso-2,6-diaminopimelate + ATP = UDP-N-acetyl-alpha-D-muramoyl-L-alanyl-gamma-D-glutamyl-meso-2,6-diaminopimelate + ADP + phosphate + H(+). It functions in the pathway cell wall biogenesis; peptidoglycan biosynthesis. Catalyzes the addition of meso-diaminopimelic acid to the nucleotide precursor UDP-N-acetylmuramoyl-L-alanyl-D-glutamate (UMAG) in the biosynthesis of bacterial cell-wall peptidoglycan. The chain is UDP-N-acetylmuramoyl-L-alanyl-D-glutamate--2,6-diaminopimelate ligase 1 from Clostridium acetobutylicum (strain ATCC 824 / DSM 792 / JCM 1419 / IAM 19013 / LMG 5710 / NBRC 13948 / NRRL B-527 / VKM B-1787 / 2291 / W).